A 119-amino-acid chain; its full sequence is Ig heavy chain V region T601 (119 aa).

The region spanning 1 to 112 is the Ig-like domain; sequence EVKLLESGGG…GYFDVWGAGT (112 aa).

The sequence is that of Ig heavy chain V region T601 from Mus musculus (Mouse).